A 418-amino-acid chain; its full sequence is Protein SSXT (418 aa).

Ser-2 bears the N-acetylserine mark. The interval 2 to 186 is transcriptional activation; sequence SVAFAAPRQR…NQMTMSQGQP (185 aa). The short motif at 50–53 is the SH2-binding element; sequence YQQM. 2 disordered regions span residues 77-118 and 188-418; these read APPT…PAPH and GNYG…NYQQ. Residues 225-251 show a composition bias toward low complexity; that stretch reads YQGQQPPMGMMGQVNQGNHMMGQRQIP. Positions 309-318 are enriched in basic and acidic residues; it reads GYDRPYEDSS. Low complexity-rich tracts occupy residues 328–337, 345–366, and 376–393; these read QYGQQQDAYQ, YPPQ…QGYG, and YPNY…YRPT. 2 consecutive repeat copies span residues 344-356 and 357-369. A 2 X 13 AA imperfect tandem repeats region spans residues 344–369; the sequence is GYPPQQQQYPGQQGYPGQQQGYGPSQ. Positions 374–377 match the SH2-binding motif; sequence PQYP. An SH3-binding motif is present at residues 392-401; the sequence is PTQPGPPQPP. Residues 394-403 are compositionally biased toward pro residues; it reads QPGPPQPPQQ. Residues 404–418 show a composition bias toward low complexity; it reads RPYGYDQGQYGNYQQ. An SH2-binding motif is present at residues 413-416; the sequence is YGNY.

The protein belongs to the SS18 family. In terms of assembly, interacts with MLLT10. Isoform 1 interacts with RBM14 isoform 1. Isoform 2 interacts with RBM14 isoform 1. Component of the multiprotein chromatin-remodeling complexes SWI/SNF: SWI/SNF-A (BAF), SWI/SNF-B (PBAF) and related complexes. The canonical complex contains a catalytic subunit (either SMARCA4/BRG1/BAF190A or SMARCA2/BRM/BAF190B) and at least SMARCE1, ACTL6A/BAF53, SMARCC1/BAF155, SMARCC2/BAF170, and SMARCB1/SNF5/BAF47. Other subunits specific to each of the complexes may also be present permitting several possible combinations developmentally and tissue specific. Component of the SWI/SNF (GBAF) subcomplex, which includes at least BICRA or BICRAL (mutually exclusive), BRD9, SS18, the core BAF subunits, SMARCA2/BRM, SMARCA4/BRG1/BAF190A, ACTL6A/BAF53, SMARCC1/BAF155, and SMARCD1/BAF60A. In terms of tissue distribution, fairly ubiquitously expressed. Expressed in synovial sarcomas and in other human cell lines. The fusion genes SSXT-SSX1 and SSXT-SSX2 are expressed only in synovial sarcomas.

The protein resides in the nucleus. Functionally, appears to function synergistically with RBM14 as a transcriptional coactivator. Isoform 1 and isoform 2 function in nuclear receptor coactivation. Isoform 1 and isoform 2 function in general transcriptional coactivation. Component of SWI/SNF chromatin remodeling subcomplex GBAF that carries out key enzymatic activities, changing chromatin structure by altering DNA-histone contacts within a nucleosome in an ATP-dependent manner. The chain is Protein SSXT (SS18) from Homo sapiens (Human).